The primary structure comprises 393 residues: NAD(P)H-quinone oxidoreductase subunit H, chloroplastic (393 aa).

This sequence belongs to the complex I 49 kDa subunit family. NDH is composed of at least 16 different subunits, 5 of which are encoded in the nucleus.

The protein localises to the plastid. It localises to the chloroplast thylakoid membrane. The catalysed reaction is a plastoquinone + NADH + (n+1) H(+)(in) = a plastoquinol + NAD(+) + n H(+)(out). The enzyme catalyses a plastoquinone + NADPH + (n+1) H(+)(in) = a plastoquinol + NADP(+) + n H(+)(out). Its function is as follows. NDH shuttles electrons from NAD(P)H:plastoquinone, via FMN and iron-sulfur (Fe-S) centers, to quinones in the photosynthetic chain and possibly in a chloroplast respiratory chain. The immediate electron acceptor for the enzyme in this species is believed to be plastoquinone. Couples the redox reaction to proton translocation, and thus conserves the redox energy in a proton gradient. The chain is NAD(P)H-quinone oxidoreductase subunit H, chloroplastic from Drimys granadensis.